The sequence spans 1158 residues: ATP-dependent helicase/deoxyribonuclease subunit B (1158 aa).

8 to 15 (GRAGTGKS) lines the ATP pocket. Cys791, Cys1112, Cys1115, and Cys1121 together coordinate [4Fe-4S] cluster.

This sequence belongs to the helicase family. AddB/RexB type 1 subfamily. As to quaternary structure, heterodimer of AddA and AddB. It depends on Mg(2+) as a cofactor. [4Fe-4S] cluster serves as cofactor.

In terms of biological role, the heterodimer acts as both an ATP-dependent DNA helicase and an ATP-dependent, dual-direction single-stranded exonuclease. Recognizes the chi site generating a DNA molecule suitable for the initiation of homologous recombination. The AddB subunit has 5' -&gt; 3' nuclease activity but not helicase activity. This chain is ATP-dependent helicase/deoxyribonuclease subunit B, found in Clostridium perfringens (strain 13 / Type A).